Reading from the N-terminus, the 169-residue chain is Der GTPase-activating protein YihI (169 aa).

2 disordered regions span residues 1–83 (MNPL…PTKP) and 150–169 (DEEE…LKGN). Residues 21–30 (NREELNAEGR) show a composition bias toward basic and acidic residues. Positions 31–40 (ARKREKKHRG) are enriched in basic residues. 2 stretches are compositionally biased toward basic and acidic residues: residues 51 to 66 (SGDK…DPRL) and 150 to 161 (DEEEREEEKQDD).

It belongs to the YihI family. In terms of assembly, interacts with Der.

Functionally, a GTPase-activating protein (GAP) that modifies Der/EngA GTPase function. May play a role in ribosome biogenesis. This Photorhabdus laumondii subsp. laumondii (strain DSM 15139 / CIP 105565 / TT01) (Photorhabdus luminescens subsp. laumondii) protein is Der GTPase-activating protein YihI.